The chain runs to 622 residues: MTSQKSSLAVLTVGAIGVVYGDIGTSVLYAIKEVFGSGHVPFTPDNVYGILSIFFWTLTVIVSLKYVSLVLRADNNGEGGLIAMLALASTAVQDRPELRKVLLLVGIFGTSLFYGDGVITPAISVLSAVEGLEVISPTFTKAVIPTTLVILFGLFAMQKHGTAGIGKFFGPITIVWFAVLALLGVSQIVTHPEILFALSPHYALMFMWENPGITFIILGAVVLCVTGAEALYADLGHFGKKPIRLAWFSVVMPSLVLNYFGQGALLLSNPAAVKNPFYLMAPDWALIPLVVLATLATVIASQALITGAFSVTKQAIQMGYLPRLRILHTSVRDTGQIYMPFVNWGLFVTIVLAVVMFRSSSNLAAAYGIAVCTDMLITTILTFYVIRYGWKYPLALCIAATSVFFLVDFAFFASNLMKLFAGGWFPLVIGGAVFTLMITWKQGRQILNEKLRTDAIDLSSFLDAVFVSPPLRVEGTAVFMTAEPGIVPNAMLHNLKHNKVLHDQNLFVTVVNHEVPWIGMDKRLQVESLGHDCWQVNIHYGFKNDLDLPRALQQIKNRGCQLEPMTTSYFLSRDTVIPTIGSGMAAWREKLFAQMHHNASGAADFLNLPNNSVVELGSKIEI.

The next 12 membrane-spanning stretches (helical) occupy residues 8–28 (LAVL…TSVL), 50–70 (ILSI…VSLV), 101–121 (VLLL…VITP), 137–157 (PTFT…LFAM), 165–185 (IGKF…LLGV), 213–233 (ITFI…ALYA), 247–267 (WFSV…ALLL), 285–305 (ALIP…QALI), 337–357 (IYMP…VVMF), 366–386 (AYGI…FYVI), 393–413 (PLAL…AFFA), and 419–439 (LFAG…LMIT).

The protein belongs to the HAK/KUP transporter (TC 2.A.72) family.

The protein resides in the cell inner membrane. The enzyme catalyses K(+)(in) + H(+)(in) = K(+)(out) + H(+)(out). Its function is as follows. Transport of potassium into the cell. Likely operates as a K(+):H(+) symporter. This Polaromonas naphthalenivorans (strain CJ2) protein is Probable potassium transport system protein Kup.